Reading from the N-terminus, the 495-residue chain is MSSKQEKTKARLPRGFVDRTSAQLYAIEVMIAQIRQVYELYGFEALETPIFEYTDVLGKFLPDEDRPNAGVFSLQDDDEQWMSLRYDLTAPLARYFSENFETLPKPYRSYRLGFVFRNEKPGPGRFRQFMQFDADIVGTPTVAADAEICMMAADSLQKLGFQHHDYVIRLNNRKILDAVLEKVGLAGSEQAQRRLTVLRAIDKLDKFGLEGVRLLLGKGRLDESGDFTKGAELKDKEIDGILSLLTIEVGTAEETFDALRKIVDQSEEGLEGVRELEEMQAIFAENDTQNRIKIDPSVVRGLEYYTGPVFEAALLFDVLNDDGQKVVFGSVGGGGRYDGLVARFRGENIPATGFSIGVSRLIAALQNLGKLPVKEKTGPVVVLMMDKEPEIVARYQKMVMQLRSAGIPAELYLGASGMKAQMKYADRRQAPCVVIQGSQERESGTIQIKDLVEGARLSHEIKDNQTWRESRPAQVTVDEEQLVKTVQDILAAQKR.

This sequence belongs to the class-II aminoacyl-tRNA synthetase family. As to quaternary structure, homodimer.

The protein localises to the cytoplasm. The catalysed reaction is tRNA(His) + L-histidine + ATP = L-histidyl-tRNA(His) + AMP + diphosphate + H(+). The polypeptide is Histidine--tRNA ligase (Bartonella henselae (strain ATCC 49882 / DSM 28221 / CCUG 30454 / Houston 1) (Rochalimaea henselae)).